The primary structure comprises 702 residues: Polyribonucleotide nucleotidyltransferase (702 aa).

Mg(2+) contacts are provided by Asp485 and Asp491. The KH domain occupies 552-611 (PKTSTLQIDPEKIRDVIGAGGKVINKIIADTGVKIDIKEDGLVYVSSAESEGVKEAVKII). Positions 621–689 (GEIYLGKVTK…SQGRINLSRK (69 aa)) constitute an S1 motif domain.

Belongs to the polyribonucleotide nucleotidyltransferase family. Mg(2+) is required as a cofactor.

It localises to the cytoplasm. The enzyme catalyses RNA(n+1) + phosphate = RNA(n) + a ribonucleoside 5'-diphosphate. In terms of biological role, involved in mRNA degradation. Catalyzes the phosphorolysis of single-stranded polyribonucleotides processively in the 3'- to 5'-direction. This is Polyribonucleotide nucleotidyltransferase from Clostridium perfringens (strain SM101 / Type A).